The following is a 422-amino-acid chain: G-protein coupled receptor 151 protein (422 aa).

The Extracellular portion of the chain corresponds to Met-1–Ser-45. Residues Asn-14 and Asn-19 are each glycosylated (N-linked (GlcNAc...) asparagine). Residues Leu-46–Leu-66 form a helical membrane-spanning segment. Residues His-67–Thr-76 lie on the Cytoplasmic side of the membrane. Residues Ile-77–Pro-97 traverse the membrane as a helical segment. Topologically, residues Val-98 to His-123 are extracellular. Cysteines 115 and 191 form a disulfide. The chain crosses the membrane as a helical span at residues Val-124–Ala-144. The Cytoplasmic portion of the chain corresponds to Ser-145–Thr-157. The helical transmembrane segment at Ile-158–Leu-178 threads the bilayer. Residues Phe-179–Met-205 lie on the Extracellular side of the membrane. The chain crosses the membrane as a helical span at residues Phe-206–Phe-226. Over Trp-227–Thr-259 the chain is Cytoplasmic. A helical transmembrane segment spans residues Ala-260–Val-280. The Extracellular portion of the chain corresponds to Lys-281–Gly-290. Residues Phe-291–Leu-311 traverse the membrane as a helical segment. Residues Val-312–Asn-422 lie on the Cytoplasmic side of the membrane. The disordered stretch occupies residues Val-339–Asn-422. Positions Thr-366–Gly-380 are enriched in basic and acidic residues.

In terms of tissue distribution, high expression in the brain and lower levels in kidney and liver. In the nervous system expressed specifically in the habenular area (at protein level).

It localises to the cell membrane. In terms of biological role, proton-sensing G-protein coupled receptor. The polypeptide is G-protein coupled receptor 151 protein (Gpr151) (Mus musculus (Mouse)).